Here is a 595-residue protein sequence, read N- to C-terminus: Cardiolipin synthase (CMP-forming) / mitochondrial hydrolase fusion protein (595 aa).

The transit peptide at 1-24 (MLHTINYRSWHLAARQLGRSTFRK) directs the protein to the mitochondrion. Transmembrane regions (helical) follow at residues 538–560 (ALQL…ASFA) and 564–586 (LFYI…RNTF).

This sequence in the N-terminal section; belongs to the HAD-like hydrolase superfamily. In the C-terminal section; belongs to the CDP-alcohol phosphatidyltransferase class-I family. Requires Mg(2+) as cofactor. Post-translationally, proteolytically cleaved, presumably during its import into the mitochondrion by mitochondrial processing peptidase.

Its subcellular location is the mitochondrion. It is found in the mitochondrion inner membrane. It carries out the reaction a CDP-1,2-diacyl-sn-glycerol + a 1,2-diacyl-sn-glycero-3-phospho-(1'-sn-glycerol) = a cardiolipin + CMP + H(+). Catalyzes the synthesis of cardiolipin (CL) (diphosphatidylglycerol) by specifically transferring a phosphatidyl group from CDP-diacylglycerol to phosphatidylglycerol (PG). CL is a key phospholipid in mitochondrial membranes and plays important roles in maintaining the functional integrity and dynamics of mitochondria under both optimal and stress conditions. In terms of biological role, activity is dispensable for viability. This Schizosaccharomyces pombe (strain 972 / ATCC 24843) (Fission yeast) protein is Cardiolipin synthase (CMP-forming) / mitochondrial hydrolase fusion protein.